Here is a 246-residue protein sequence, read N- to C-terminus: Acetoacetyl-CoA reductase (246 aa).

Residues 12 to 14 (GGI) and 88 to 92 (CAGIT) contribute to the NADP(+) site. Substrate is bound by residues Asp94 and 147-150 (QFGQ). Residue Tyr153 is the Proton acceptor of the active site. Residue 183-186 (PGYV) participates in NADP(+) binding. 184 to 185 (GY) serves as a coordination point for substrate.

Belongs to the short-chain dehydrogenases/reductases (SDR) family.

Its subcellular location is the cytoplasm. It carries out the reaction a (3R)-3-hydroxyacyl-CoA + NADP(+) = a 3-oxoacyl-CoA + NADPH + H(+). The protein operates within biopolymer metabolism; poly-(R)-3-hydroxybutanoate biosynthesis. This Allochromatium vinosum (strain ATCC 17899 / DSM 180 / NBRC 103801 / NCIMB 10441 / D) (Chromatium vinosum) protein is Acetoacetyl-CoA reductase.